Reading from the N-terminus, the 262-residue chain is Hydroxyethylthiazole kinase (262 aa).

M44 contacts substrate. Residues R118 and T166 each contribute to the ATP site. Residue G193 coordinates substrate.

It belongs to the Thz kinase family. Requires Mg(2+) as cofactor.

The enzyme catalyses 5-(2-hydroxyethyl)-4-methylthiazole + ATP = 4-methyl-5-(2-phosphooxyethyl)-thiazole + ADP + H(+). Its pathway is cofactor biosynthesis; thiamine diphosphate biosynthesis; 4-methyl-5-(2-phosphoethyl)-thiazole from 5-(2-hydroxyethyl)-4-methylthiazole: step 1/1. Catalyzes the phosphorylation of the hydroxyl group of 4-methyl-5-beta-hydroxyethylthiazole (THZ). The chain is Hydroxyethylthiazole kinase from Chlamydia felis (strain Fe/C-56) (Chlamydophila felis).